Consider the following 268-residue polypeptide: Octanoyltransferase (268 aa).

The 189-residue stretch at 49 to 237 (GTQGDVILVV…ALLKALSGEL (189 aa)) folds into the BPL/LPL catalytic domain. Residues 87–94 (RGGRITWH), 167–169 (ALG), and 180–182 (GLA) contribute to the substrate site. The Acyl-thioester intermediate role is filled by Cys-198.

It belongs to the LipB family.

Its subcellular location is the cytoplasm. The catalysed reaction is octanoyl-[ACP] + L-lysyl-[protein] = N(6)-octanoyl-L-lysyl-[protein] + holo-[ACP] + H(+). The protein operates within protein modification; protein lipoylation via endogenous pathway; protein N(6)-(lipoyl)lysine from octanoyl-[acyl-carrier-protein]: step 1/2. Its function is as follows. Catalyzes the transfer of endogenously produced octanoic acid from octanoyl-acyl-carrier-protein onto the lipoyl domains of lipoate-dependent enzymes. Lipoyl-ACP can also act as a substrate although octanoyl-ACP is likely to be the physiological substrate. This chain is Octanoyltransferase, found in Corynebacterium aurimucosum (strain ATCC 700975 / DSM 44827 / CIP 107346 / CN-1) (Corynebacterium nigricans).